A 560-amino-acid chain; its full sequence is MRLLSLAPDRPRRGGPRHLTSGSPALPPPPPLLLLLLLLGGCLGVSGAAKSSRRPNVVLLLADDQDEVLGGMTPLKKTKALIGEMGMTFSSAYVPSALCCPSRASILTGKYPHNLHVVNNTLEGNCSSKSWQKIQEPNTFPAILRSMCGYQTFFAGKYLNEYGAPDAGGLGHVPLGWSYWYALEKNSKYYNYTLSINGKARKHGENYSVDYLTDVLANVSLDFLDYKSNSEPFFMMISTPAPHSPWTAAPQYQNAFQNVFAPRNKNFNIHGTNKHWLIRQAKTPMTNSSIQFLDNAFRKRWQTLLSVDDLVEKLVKRLEFNGELNNTYIFYTSDNGYHTGQFSLPIDKRQLYEFDIKVPLLVRGPGIKPNQTSKMLVANIDLGPTILDIAGYSLNKTQMDGMSFLPILKGASNLTWRSDVLVEYQGEGRNVTDPTCPSLSPGVSQCFPDCVCEDAYNNTYACVRTMSERWNLQYCEFDDQEVFVEVYNLTADPHQLNNIAKSIDPELLGKMNYRLMMLQSCSGPTCRTPGVFDPGYRFDPRLMFSNHGSVRTRRFSKHLL.

The segment at Met1 to Ala25 is disordered. An N-terminal signal peptide occupies residues Met1–Ala48. Residues Asp63, Asp64, and Cys99 each contribute to the Ca(2+) site. The active-site Nucleophile is Cys99. At Cys99 the chain carries 3-oxoalanine (Cys). 7 N-linked (GlcNAc...) asparagine glycosylation sites follow: Asn119, Asn125, Asn191, Asn206, Asn218, Asn287, and Asn325. Asp334 and Asn335 together coordinate Ca(2+). 6 N-linked (GlcNAc...) asparagine glycosylation sites follow: Asn370, Asn395, Asn413, Asn430, Asn457, and Asn488. Ser549 carries the post-translational modification Phosphoserine.

It belongs to the sulfatase family. It depends on Ca(2+) as a cofactor. The conversion to 3-oxoalanine (also known as C-formylglycine, FGly), of a serine or cysteine residue in prokaryotes and of a cysteine residue in eukaryotes, is critical for catalytic activity.

Its subcellular location is the lysosome. It carries out the reaction Hydrolysis of the 6-sulfate groups of the N-acetyl-D-glucosamine 6-sulfate units of heparan sulfate and keratan sulfate.. Hydrolyzes 6-sulfate groups in N-acetyl-d-glucosaminide units of heparin sulfate and keratan sulfate. This is N-acetylglucosamine-6-sulfatase (GNS) from Bos taurus (Bovine).